We begin with the raw amino-acid sequence, 175 residues long: MASKMCEPLVIGRVIGEVVDYFCPSVKMSVVYNNNKHVYNGHEFFPSSVTSKPRVEVHGGDLRSFFTLIMIDPDVPGPSDPYLREHLHWIVTDIPGTTDCSFGREVVGYEMPRPNIGIHRFVFLLFKQKKRQTISSAPVSRDQFSSRKFSEENELGSPVAAVFFNCQRETAARRR.

The protein belongs to the phosphatidylethanolamine-binding protein family.

It localises to the cytoplasm. Its function is as follows. Not known. In plants homozygous for the recessive allele of the SP gene, sympodial segments develop progressively fewer nodes until the shoot is terminated by two consecutive. inflorescences. This chain is Protein SELF-PRUNING (SP), found in Solanum lycopersicum (Tomato).